The following is a 953-amino-acid chain: Translation initiation factor IF-2 (953 aa).

Residues 53-368 (AKKAVAGTSE…PVTERKFHEL (316 aa)) form a disordered region. Composition is skewed to basic and acidic residues over residues 135-151 (FKAEREARAKEQAERRK) and 162-190 (RNDRNDRRNNQNDRNDRNSQNRNDRRNRQ). Residues 191–214 (EQGNQHRNQGQSQYNQQRQSFNQG) are compositionally biased toward low complexity. Over residues 236 to 266 (RSSEERFKQAKANKEALREQNKRKEQAKLED) the composition is skewed to basic and acidic residues. Residues 274 to 288 (PKPTAKAPATPAPTA) are compositionally biased toward low complexity. Basic and acidic residues predominate over residues 301–318 (ARPDKERDNFDHEEDGPR). Low complexity predominate over residues 332–341 (NQKNSNWNNN). The tr-type G domain occupies 455–622 (ERPPVVTIMG…TVLLVAEIQE (168 aa)). Residues 464–471 (GHVDHGKT) are G1. 464–471 (GHVDHGKT) contacts GTP. The interval 489 to 493 (GITQH) is G2. The segment at 510–513 (DTPG) is G3. GTP is bound by residues 510 to 514 (DTPGH) and 564 to 567 (NKID). The G4 stretch occupies residues 564 to 567 (NKID). Positions 600–602 (SAK) are G5.

The protein belongs to the TRAFAC class translation factor GTPase superfamily. Classic translation factor GTPase family. IF-2 subfamily.

The protein localises to the cytoplasm. One of the essential components for the initiation of protein synthesis. Protects formylmethionyl-tRNA from spontaneous hydrolysis and promotes its binding to the 30S ribosomal subunits. Also involved in the hydrolysis of GTP during the formation of the 70S ribosomal complex. The chain is Translation initiation factor IF-2 from Streptococcus gordonii (strain Challis / ATCC 35105 / BCRC 15272 / CH1 / DL1 / V288).